The chain runs to 206 residues: Probable chemoreceptor glutamine deamidase CheD 1 (206 aa).

It belongs to the CheD family.

The catalysed reaction is L-glutaminyl-[protein] + H2O = L-glutamyl-[protein] + NH4(+). Functionally, probably deamidates glutamine residues to glutamate on methyl-accepting chemotaxis receptors (MCPs), playing an important role in chemotaxis. This chain is Probable chemoreceptor glutamine deamidase CheD 1, found in Shewanella oneidensis (strain ATCC 700550 / JCM 31522 / CIP 106686 / LMG 19005 / NCIMB 14063 / MR-1).